Consider the following 209-residue polypeptide: Ribosomal RNA large subunit methyltransferase E (209 aa).

S-adenosyl-L-methionine contacts are provided by Gly63, Trp65, Asp83, Asp99, and Asp124. Residue Lys164 is the Proton acceptor of the active site.

The protein belongs to the class I-like SAM-binding methyltransferase superfamily. RNA methyltransferase RlmE family.

It is found in the cytoplasm. The enzyme catalyses uridine(2552) in 23S rRNA + S-adenosyl-L-methionine = 2'-O-methyluridine(2552) in 23S rRNA + S-adenosyl-L-homocysteine + H(+). Functionally, specifically methylates the uridine in position 2552 of 23S rRNA at the 2'-O position of the ribose in the fully assembled 50S ribosomal subunit. The chain is Ribosomal RNA large subunit methyltransferase E from Tolumonas auensis (strain DSM 9187 / NBRC 110442 / TA 4).